Reading from the N-terminus, the 59-residue chain is Movement protein TGBp3 (59 aa).

Residues 1–3 (MHL) are Lumenal-facing. A helical transmembrane segment spans residues 4–21 (AIVGALTLVLTLFVLHYT). Over 22–59 (TKDDRCYILINGHSAFTNCPASPDLAKVISQLKPHNHG) the chain is Cytoplasmic.

Belongs to the Tymovirales TGBp3 protein family.

It localises to the host endoplasmic reticulum membrane. Plays a role in viral cell-to-cell propagation, by facilitating genome transport to neighboring plant cells through plasmosdesmata. May induce the formation of granular vesicles derived from the Endoplasmic reticulum, which align on actin filaments. In Chenopodium album (Fat hen), this protein is Movement protein TGBp3.